The sequence spans 216 residues: Probable transaldolase (216 aa).

The active-site Schiff-base intermediate with substrate is Lys-83.

It belongs to the transaldolase family. Type 3B subfamily.

It is found in the cytoplasm. The enzyme catalyses D-sedoheptulose 7-phosphate + D-glyceraldehyde 3-phosphate = D-erythrose 4-phosphate + beta-D-fructose 6-phosphate. The protein operates within carbohydrate degradation; pentose phosphate pathway; D-glyceraldehyde 3-phosphate and beta-D-fructose 6-phosphate from D-ribose 5-phosphate and D-xylulose 5-phosphate (non-oxidative stage): step 2/3. In terms of biological role, transaldolase is important for the balance of metabolites in the pentose-phosphate pathway. This is Probable transaldolase from Shouchella clausii (strain KSM-K16) (Alkalihalobacillus clausii).